Consider the following 267-residue polypeptide: Hydroxyacylglutathione hydrolase (267 aa).

Zn(2+)-binding residues include histidine 55, histidine 57, aspartate 59, histidine 60, histidine 121, aspartate 138, and histidine 176.

Belongs to the metallo-beta-lactamase superfamily. Glyoxalase II family. As to quaternary structure, monomer. Zn(2+) is required as a cofactor.

The catalysed reaction is an S-(2-hydroxyacyl)glutathione + H2O = a 2-hydroxy carboxylate + glutathione + H(+). It participates in secondary metabolite metabolism; methylglyoxal degradation; (R)-lactate from methylglyoxal: step 2/2. Functionally, thiolesterase that catalyzes the hydrolysis of S-D-lactoyl-glutathione to form glutathione and D-lactic acid. This chain is Hydroxyacylglutathione hydrolase, found in Shewanella sp. (strain ANA-3).